Here is a 353-residue protein sequence, read N- to C-terminus: Photosystem II D2 protein (353 aa).

At Thr2 the chain carries N-acetylthreonine. Thr2 bears the Phosphothreonine mark. Residues 41–61 (CAYFALGGWFTGTTFVTSWYT) traverse the membrane as a helical segment. A chlorophyll a-binding site is contributed by His118. The helical transmembrane segment at 125-141 (GFMLRQFELARSVQLRP) threads the bilayer. Residues Gln130 and Asn143 each contribute to the pheophytin a site. The chain crosses the membrane as a helical span at residues 153 to 166 (VFISVFFIYPLGQS). His198 is a binding site for chlorophyll a. A helical transmembrane segment spans residues 208–228 (AALLCAIHGATVENTLFEDGD). Residues His215 and Phe262 each contribute to the a plastoquinone site. A Fe cation-binding site is contributed by His215. His269 serves as a coordination point for Fe cation. A helical transmembrane segment spans residues 279-295 (GLWMSALGVVGLALNLR).

The protein belongs to the reaction center PufL/M/PsbA/D family. PSII is composed of 1 copy each of membrane proteins PsbA, PsbB, PsbC, PsbD, PsbE, PsbF, PsbH, PsbI, PsbJ, PsbK, PsbL, PsbM, PsbT, PsbX, PsbY, PsbZ, Psb30/Ycf12, at least 3 peripheral proteins of the oxygen-evolving complex and a large number of cofactors. It forms dimeric complexes. It depends on The D1/D2 heterodimer binds P680, chlorophylls that are the primary electron donor of PSII, and subsequent electron acceptors. It shares a non-heme iron and each subunit binds pheophytin, quinone, additional chlorophylls, carotenoids and lipids. There is also a Cl(-1) ion associated with D1 and D2, which is required for oxygen evolution. The PSII complex binds additional chlorophylls, carotenoids and specific lipids. as a cofactor.

The protein localises to the plastid membrane. It catalyses the reaction 2 a plastoquinone + 4 hnu + 2 H2O = 2 a plastoquinol + O2. In terms of biological role, photosystem II (PSII) is a light-driven water:plastoquinone oxidoreductase that uses light energy to abstract electrons from H(2)O, generating O(2) and a proton gradient subsequently used for ATP formation. It consists of a core antenna complex that captures photons, and an electron transfer chain that converts photonic excitation into a charge separation. The D1/D2 (PsbA/PsbD) reaction center heterodimer binds P680, the primary electron donor of PSII as well as several subsequent electron acceptors. D2 is needed for assembly of a stable PSII complex. This is Photosystem II D2 protein from Cuscuta reflexa (Southern Asian dodder).